The chain runs to 108 residues: Small cysteine and glycine repeat-containing protein 8 (108 aa).

Residues 4–84 (CGCGGCGGGC…RRTCSSCGCG (81 aa)) are 12 X 2 AA repeats of CG.

This sequence belongs to the KRTAP type 28 family.

In the hair cortex, hair keratin intermediate filaments are embedded in an interfilamentous matrix, consisting of hair keratin-associated proteins (KRTAP), which are essential for the formation of a rigid and resistant hair shaft through their extensive disulfide bond cross-linking with abundant cysteine residues of hair keratins. The matrix proteins include the high-sulfur and high-glycine-tyrosine keratins. This chain is Small cysteine and glycine repeat-containing protein 8, found in Homo sapiens (Human).